Reading from the N-terminus, the 831-residue chain is Vi polysaccharide biosynthesis protein TviD (831 aa).

It participates in glycan metabolism; Vi-antigen biosynthesis. The protein operates within capsule biogenesis; capsule polysaccharide biosynthesis. May be required for maturation of the Vi polysaccharide. The protein is Vi polysaccharide biosynthesis protein TviD (tviD) of Salmonella typhi.